Here is a 346-residue protein sequence, read N- to C-terminus: Quinolinate synthase (346 aa).

Residues H47 and S68 each contribute to the iminosuccinate site. [4Fe-4S] cluster is bound at residue C113. Iminosuccinate is bound by residues 139-141 and S156; that span reads YAN. Residue C200 participates in [4Fe-4S] cluster binding. Residues 226–228 and T243 contribute to the iminosuccinate site; that span reads HPE. C297 provides a ligand contact to [4Fe-4S] cluster.

Belongs to the quinolinate synthase family. Type 1 subfamily. [4Fe-4S] cluster serves as cofactor.

The protein localises to the cytoplasm. It carries out the reaction iminosuccinate + dihydroxyacetone phosphate = quinolinate + phosphate + 2 H2O + H(+). It participates in cofactor biosynthesis; NAD(+) biosynthesis; quinolinate from iminoaspartate: step 1/1. Its function is as follows. Catalyzes the condensation of iminoaspartate with dihydroxyacetone phosphate to form quinolinate. This is Quinolinate synthase from Pseudoalteromonas translucida (strain TAC 125).